The following is a 445-amino-acid chain: Probable glycine dehydrogenase (decarboxylating) subunit 1 (445 aa).

It belongs to the GcvP family. N-terminal subunit subfamily. In terms of assembly, the glycine cleavage system is composed of four proteins: P, T, L and H. In this organism, the P 'protein' is a heterodimer of two subunits.

It carries out the reaction N(6)-[(R)-lipoyl]-L-lysyl-[glycine-cleavage complex H protein] + glycine + H(+) = N(6)-[(R)-S(8)-aminomethyldihydrolipoyl]-L-lysyl-[glycine-cleavage complex H protein] + CO2. Its function is as follows. The glycine cleavage system catalyzes the degradation of glycine. The P protein binds the alpha-amino group of glycine through its pyridoxal phosphate cofactor; CO(2) is released and the remaining methylamine moiety is then transferred to the lipoamide cofactor of the H protein. This is Probable glycine dehydrogenase (decarboxylating) subunit 1 from Anaeromyxobacter sp. (strain Fw109-5).